The following is a 180-amino-acid chain: Large ribosomal subunit protein uL5 (180 aa).

Belongs to the universal ribosomal protein uL5 family. In terms of assembly, part of the 50S ribosomal subunit; part of the 5S rRNA/L5/L18/L25 subcomplex. Contacts the 5S rRNA and the P site tRNA. Forms a bridge to the 30S subunit in the 70S ribosome.

Functionally, this is one of the proteins that bind and probably mediate the attachment of the 5S RNA into the large ribosomal subunit, where it forms part of the central protuberance. In the 70S ribosome it contacts protein S13 of the 30S subunit (bridge B1b), connecting the 2 subunits; this bridge is implicated in subunit movement. Contacts the P site tRNA; the 5S rRNA and some of its associated proteins might help stabilize positioning of ribosome-bound tRNAs. The chain is Large ribosomal subunit protein uL5 from Spiroplasma kunkelii.